A 463-amino-acid chain; its full sequence is MATVTATTKVPEIRDVTRIERIGAHSHIRGLGLDDALEPRQASQGMVGQLAARRAAGVVLEMIREGKIAGRAVLIAGQPGTGKTAIAMGMAQALGPDTPFTAIAGSEIFSLEMSKTEALTQAFRRSIGVRIKEETEIIEGEVVEIQIDRPATGTGSKVGKLTLKTTEMETIYDLGTKMIESLTKDKVQAGDVITIDKATGKISKLGRSFTRARDYDAMGSQTKFVQCPDGELQKRKEVVHTVSLHEIDVINSRTQGFLALFSGDTGEIKSEVREQINAKVAEWREEGKAEIIPGVLFIDEVHMLDIESFSFLNRALESDMAPVLIMATNRGITRIRGTSYQSPHGIPIDLLDRLLIVSTTPYSEKDTKQILRIRCEEEDVEMSEDAYTVLTRIGLETSLRYAIQLITAASLVCRKRKGTEVQVDDIKRVYSLFLDESRSTQYMKEYQDAFLFNELKGETMDTS.

N-acetylalanine is present on alanine 2. Lysine 9 participates in a covalent cross-link: Glycyl lysine isopeptide (Lys-Gly) (interchain with G-Cter in SUMO2). Residue glycine 77 to threonine 84 coordinates ATP. Phosphoserine is present on serine 437. Residues lysine 444 and lysine 456 each participate in a glycyl lysine isopeptide (Lys-Gly) (interchain with G-Cter in SUMO2) cross-link.

Belongs to the RuvB family. Forms homohexameric rings. Can form a dodecamer with RUVBL1 made of two stacked hexameric rings; however, even though RUVBL1 and RUVBL2 are present in equimolar ratio, the oligomeric status of each hexamer is not known. Oligomerization may regulate binding to nucleic acids and conversely, binding to nucleic acids may affect the dodecameric assembly. Interaction of the complex with DHX34 results in conformational changes of the N-terminus of the RUVBL2 subunits, resulting in loss of nucleotide binding ability and ATP hydrolysis of the complex. Interacts with the transcriptional activation domain of MYC. Interacts with ATF2. Component of the RNA polymerase II holoenzyme complex. May also act to bridge the LEF1/TCF1-CTNNB1 complex and TBP. Component of the NuA4 histone acetyltransferase complex which contains the catalytic subunit KAT5/TIP60 and the subunits EP400, TRRAP/PAF400, BRD8/SMAP, EPC1, DMAP1/DNMAP1, RUVBL1/TIP49, RUVBL2, ING3, actin, ACTL6A/BAF53A, MORF4L1/MRG15, MORF4L2/MRGX, MRGBP, YEATS4/GAS41, VPS72/YL1 and MEAF6. The NuA4 complex interacts with MYC and the adenovirus E1A protein. RUVBL2 interacts with EP400. Component of a NuA4-related complex which contains EP400, TRRAP/PAF400, SRCAP, BRD8/SMAP, EPC1, DMAP1/DNMAP1, RUVBL1/TIP49, RUVBL2, actin, ACTL6A/BAF53A, VPS72 and YEATS4/GAS41. Interacts with NPAT. Component of the chromatin-remodeling INO80 complex; specifically part of a complex module associated with the helicase ATP-binding and the helicase C-terminal domain of INO80. Component of some MLL1/MLL complex, at least composed of the core components KMT2A/MLL1, ASH2L, HCFC1/HCF1, WDR5 and RBBP5, as well as the facultative components BACC1, CHD8, E2F6, HSP70, INO80C, KANSL1, LAS1L, MAX, MCRS1, MGA, MYST1/MOF, PELP1, PHF20, PRP31, RING2, RUVB1/TIP49A, RUVB2/TIP49B, SENP3, TAF1, TAF4, TAF6, TAF7, TAF9 and TEX10. Interacts with IGHMBP2. Interacts with TELO2. Interacts with HINT1. Component of a SWR1-like complex. Component of the R2TP complex composed at least of RUVBL1, RUVBL2, RPAP3 and PIHD1. Component of the PAQosome complex which is responsible for the biogenesis of several protein complexes and which consists of R2TP complex members RUVBL1, RUVBL2, RPAP3 and PIH1D1, URI complex members PFDN2, PFDN6, PDRG1, UXT and URI1 as well as ASDURF, POLR2E and DNAAF10/WDR92. Interacts with ITFG1. Interacts with ZMYND10. Interacts with WAC; WAC positively regulates MTOR activity by promoting the assembly of the TTT complex composed of TELO2, TTI1 and TTI2 and the RUVBL complex composed of RUVBL1 and RUVBL2 into the TTT-RUVBL complex which leads to the dimerization of the mTORC1 complex and its subsequent activation. Forms a complex with APPL1 and APPL2. Interacts with ZNHIT2 (via HIT-type zinc finger) in the presence of ATP or ADP; shows a stronger interaction in the presence of ADP. The RUVBL1/RUVBL2 complex interacts with ZNHIT1 (via HIT-type zinc finger), ZNHIT3 (via HIT-type zinc finger), ZNHIT6 (via HIT-type zinc finger) and DDX59/ZNHIT5 (via HIT-type zinc finger) in the presence of ADP. Interacts with NOPCHAP1; the interaction is direct and disrupted upon ATP binding. Interacts with SMG1. In terms of assembly, (Microbial infection) Interacts with Mumps L polymerase; this interaction regulates the viral transcription. In terms of tissue distribution, ubiquitously expressed. Highly expressed in testis and thymus.

The protein localises to the nucleus matrix. The protein resides in the nucleus. It localises to the nucleoplasm. It is found in the cytoplasm. Its subcellular location is the membrane. The protein localises to the dynein axonemal particle. It carries out the reaction ATP + H2O = ADP + phosphate + H(+). In terms of biological role, possesses single-stranded DNA-stimulated ATPase and ATP-dependent DNA helicase (5' to 3') activity; hexamerization is thought to be critical for ATP hydrolysis and adjacent subunits in the ring-like structure contribute to the ATPase activity. Component of the NuA4 histone acetyltransferase complex which is involved in transcriptional activation of select genes principally by acetylation of nucleosomal histones H4 and H2A. This modification may both alter nucleosome -DNA interactions and promote interaction of the modified histones with other proteins which positively regulate transcription. This complex may be required for the activation of transcriptional programs associated with oncogene and proto-oncogene mediated growth induction, tumor suppressor mediated growth arrest and replicative senescence, apoptosis, and DNA repair. The NuA4 complex ATPase and helicase activities seem to be, at least in part, contributed by the association of RUVBL1 and RUVBL2 with EP400. NuA4 may also play a direct role in DNA repair when recruited to sites of DNA damage. Component of a SWR1-like complex that specifically mediates the removal of histone H2A.Z/H2AZ1 from the nucleosome. Proposed core component of the chromatin remodeling INO80 complex which exhibits DNA- and nucleosome-activated ATPase activity and catalyzes ATP-dependent nucleosome sliding. Plays an essential role in oncogenic transformation by MYC and also modulates transcriptional activation by the LEF1/TCF1-CTNNB1 complex. May also inhibit the transcriptional activity of ATF2. Involved in the endoplasmic reticulum (ER)-associated degradation (ERAD) pathway where it negatively regulates expression of ER stress response genes. May play a role in regulating the composition of the U5 snRNP complex. The protein is RuvB-like 2 (RUVBL2) of Homo sapiens (Human).